The sequence spans 127 residues: Large ribosomal subunit protein uL18 (127 aa).

It belongs to the universal ribosomal protein uL18 family. Part of the 50S ribosomal subunit; part of the 5S rRNA/L5/L18/L25 subcomplex. Contacts the 5S and 23S rRNAs.

Its function is as follows. This is one of the proteins that bind and probably mediate the attachment of the 5S RNA into the large ribosomal subunit, where it forms part of the central protuberance. The sequence is that of Large ribosomal subunit protein uL18 from Streptomyces coelicolor (strain ATCC BAA-471 / A3(2) / M145).